Reading from the N-terminus, the 146-residue chain is Large ribosomal subunit protein bL9 (146 aa).

Belongs to the bacterial ribosomal protein bL9 family.

Binds to the 23S rRNA. The sequence is that of Large ribosomal subunit protein bL9 from Flavobacterium johnsoniae (strain ATCC 17061 / DSM 2064 / JCM 8514 / BCRC 14874 / CCUG 350202 / NBRC 14942 / NCIMB 11054 / UW101) (Cytophaga johnsonae).